The sequence spans 214 residues: MSESRLVVALDLTDKDRALEIARSIGRQVFAIKINWPLVLAGSGSIIGEIARVSRVVCDFKIADIPNTNSIIAKFARDQGAWGIISHSFTGLESLRSVVEASGDTKVFSVVAMSHPGSDLINDNYRKLMDISERAGVYGYIAPGNKLSDLSEIRKRTKKTIMSPGIGSQGGRASDAIKAGADLVIVGRSIYESADPVTAAEAINEEIAKAVEQN.

Residues aspartate 11, lysine 33, 59–68 (DFKIADIPNT), serine 114, 164–174 (PGIGSQGGRAS), glycine 187, and arginine 188 contribute to the substrate site. The Proton donor role is filled by lysine 61.

Belongs to the OMP decarboxylase family. Type 1 subfamily. Homodimer.

The enzyme catalyses orotidine 5'-phosphate + H(+) = UMP + CO2. It participates in pyrimidine metabolism; UMP biosynthesis via de novo pathway; UMP from orotate: step 2/2. In terms of biological role, catalyzes the decarboxylation of orotidine 5'-monophosphate (OMP) to uridine 5'-monophosphate (UMP). This chain is Orotidine 5'-phosphate decarboxylase, found in Thermoplasma acidophilum (strain ATCC 25905 / DSM 1728 / JCM 9062 / NBRC 15155 / AMRC-C165).